Consider the following 403-residue polypeptide: 4-hydroxy-3-methylbut-2-enyl diphosphate reductase (403 aa).

Cys66 serves as a coordination point for [4Fe-4S] cluster. His96 contributes to the (2E)-4-hydroxy-3-methylbut-2-enyl diphosphate binding site. His96 is a dimethylallyl diphosphate binding site. Isopentenyl diphosphate is bound at residue His96. A [4Fe-4S] cluster-binding site is contributed by Cys157. His185 provides a ligand contact to (2E)-4-hydroxy-3-methylbut-2-enyl diphosphate. His185 contacts dimethylallyl diphosphate. His185 is an isopentenyl diphosphate binding site. Catalysis depends on Glu187, which acts as the Proton donor. Thr250 lines the (2E)-4-hydroxy-3-methylbut-2-enyl diphosphate pocket. Cys288 lines the [4Fe-4S] cluster pocket. Residues Ser317, Ser318, Asn319, and Ser379 each coordinate (2E)-4-hydroxy-3-methylbut-2-enyl diphosphate. Dimethylallyl diphosphate-binding residues include Ser317, Ser318, Asn319, and Ser379. Isopentenyl diphosphate-binding residues include Ser317, Ser318, Asn319, and Ser379.

This sequence belongs to the IspH family. [4Fe-4S] cluster is required as a cofactor.

The enzyme catalyses isopentenyl diphosphate + 2 oxidized [2Fe-2S]-[ferredoxin] + H2O = (2E)-4-hydroxy-3-methylbut-2-enyl diphosphate + 2 reduced [2Fe-2S]-[ferredoxin] + 2 H(+). The catalysed reaction is dimethylallyl diphosphate + 2 oxidized [2Fe-2S]-[ferredoxin] + H2O = (2E)-4-hydroxy-3-methylbut-2-enyl diphosphate + 2 reduced [2Fe-2S]-[ferredoxin] + 2 H(+). The protein operates within isoprenoid biosynthesis; dimethylallyl diphosphate biosynthesis; dimethylallyl diphosphate from (2E)-4-hydroxy-3-methylbutenyl diphosphate: step 1/1. Its pathway is isoprenoid biosynthesis; isopentenyl diphosphate biosynthesis via DXP pathway; isopentenyl diphosphate from 1-deoxy-D-xylulose 5-phosphate: step 6/6. Functionally, catalyzes the conversion of 1-hydroxy-2-methyl-2-(E)-butenyl 4-diphosphate (HMBPP) into a mixture of isopentenyl diphosphate (IPP) and dimethylallyl diphosphate (DMAPP). Acts in the terminal step of the DOXP/MEP pathway for isoprenoid precursor biosynthesis. The polypeptide is 4-hydroxy-3-methylbut-2-enyl diphosphate reductase (Rippkaea orientalis (strain PCC 8801 / RF-1) (Cyanothece sp. (strain PCC 8801))).